Reading from the N-terminus, the 245-residue chain is DNA polymerase sliding clamp 1 (245 aa).

Belongs to the PCNA family. Homotrimer. The subunits circularize to form a toroid; DNA passes through its center. Replication factor C (RFC) is required to load the toroid on the DNA.

In terms of biological role, sliding clamp subunit that acts as a moving platform for DNA processing. Responsible for tethering the catalytic subunit of DNA polymerase and other proteins to DNA during high-speed replication. The chain is DNA polymerase sliding clamp 1 from Sulfurisphaera ohwakuensis.